A 238-amino-acid polypeptide reads, in one-letter code: N-acetylneuraminic acid outer membrane channel protein NanC (238 aa).

A signal peptide spans 1 to 23 (MKKAKILSGVLLLCFSSPLISQA). The Periplasmic portion of the chain corresponds to 24-25 (AT). A transmembrane span lies at residues 26 to 32 (LDVRGGY). The Extracellular segment spans residues 33 to 39 (RSGSHAY). A transmembrane span lies at residues 40–49 (ETRLKVSEGW). Residues 50 to 52 (QNG) are Periplasmic-facing. A transmembrane span lies at residues 53–61 (WWASMESNT). Residues 62–76 (WNTIHDNKKENAALN) are Extracellular-facing. Residues 77–86 (DVQVEVNYAI) are membrane-embedded. Residues 87–91 (KLDDQ) lie on the Periplasmic side of the membrane. Positions 92–102 (WTVRPGMLTHF) form a transmembrane segment. At 103–107 (SSNGT) the chain is on the extracellular side. A membrane pass occupies residues 108-117 (RYGPYVKLSW). Residues 118–122 (DATKD) are Periplasmic-facing. A membrane pass occupies residues 123–132 (LNFGIRYRYD). Residues 133–151 (WKAYRQQDLSGDMSRDNVH) lie on the Extracellular side of the membrane. A membrane pass occupies residues 152 to 159 (RWDGYVTY). Residues 160–164 (HINSD) lie on the Periplasmic side of the membrane. The hydrophobic stretch at 165-173 (FTFAWQTTL) threads the membrane. The Extracellular segment spans residues 174–190 (YSKQNDYRYANHKKWAT). The chain crosses the lipid bilayer at residues 191 to 200 (ENAFVLQYHM). Over 201-203 (TPD) the chain is Periplasmic. The hydrophobic stretch at 204–212 (ITPYIEYDY) threads the membrane. Over 213–228 (LDRQGVYNGRDNLSEN) the chain is Extracellular. A membrane pass occupies residues 229–236 (SYRIGVSF). Residues 237–238 (KL) are Periplasmic-facing.

It belongs to the oligogalacturonate-specific porin KdgM (TC 1.B.35) family. NanC subfamily. Monomer.

The protein resides in the cell outer membrane. It catalyses the reaction N-acetylneuraminate(in) = N-acetylneuraminate(out). Functionally, outer membrane channel protein allowing the entry of N-acetylneuraminic acid (Neu5Ac, the most abundant sialic acid on host cell surfaces) into the bacteria. NanC proteins form high-conductance channels which are open at low membrane potentials and which have a weak anion selectivity. The polypeptide is N-acetylneuraminic acid outer membrane channel protein NanC (nanC) (Escherichia coli O157:H7).